The chain runs to 375 residues: Alcohol dehydrogenase 1 (375 aa).

Ser-2 carries the N-acetylserine modification. The Zn(2+) site is built by Cys-47, His-68, Cys-98, Cys-101, Cys-104, Cys-112, and Cys-175. Residues 200 to 205 (WSGRVG), Asp-224, and Lys-229 each bind NAD(+). N6-succinyllysine is present on Lys-234. 293 to 295 (VGV) serves as a coordination point for NAD(+). Lys-340 carries the post-translational modification N6-succinyllysine. Position 370 (Arg-370) interacts with NAD(+).

The protein belongs to the zinc-containing alcohol dehydrogenase family. Class-I subfamily. As to quaternary structure, homodimer. Requires Zn(2+) as cofactor.

The protein localises to the cytoplasm. It carries out the reaction a primary alcohol + NAD(+) = an aldehyde + NADH + H(+). The enzyme catalyses a secondary alcohol + NAD(+) = a ketone + NADH + H(+). This Geomys bursarius (Plains pocket gopher) protein is Alcohol dehydrogenase 1 (ADH1).